The sequence spans 263 residues: Methylesterase 1 (263 aa).

The active-site Acyl-ester intermediate is the S85. Active-site charge relay system residues include D213 and H241.

The protein belongs to the AB hydrolase superfamily. Methylesterase family.

It carries out the reaction methyl (indol-3-yl)acetate + H2O = (indol-3-yl)acetate + methanol + H(+). The catalysed reaction is methyl (-)-jasmonate + H2O = jasmonate + methanol + H(+). It catalyses the reaction methyl salicylate + H2O = salicylate + methanol + H(+). The protein operates within plant hormone biosynthesis. It participates in lipid metabolism; oxylipin biosynthesis. Its activity is regulated as follows. Esterase activity is down-regulated by salicylic acid (SA). In terms of biological role, methylesterase shown to have carboxylesterase activity, methyl indole-3-acetic acid (MeIAA) esterase activity, methyl salicylate (MeSA) esterase activity and methyl jasmonate (MeJA) esterase activity in vitro. Required to convert methyl salicylate (MeSA) to salicylic acid (SA) as part of the signal transduction pathways that activate systemic acquired resistance in systemic tissue. MeSA is believed to be an inactive form that needs to be demethylated to exert a biological effect. The protein is Methylesterase 1 of Arabidopsis thaliana (Mouse-ear cress).